The chain runs to 413 residues: Serine hydroxymethyltransferase (413 aa).

(6S)-5,6,7,8-tetrahydrofolate is bound by residues Leu119 and 123 to 125; that span reads GHL. Lys228 is modified (N6-(pyridoxal phosphate)lysine). A (6S)-5,6,7,8-tetrahydrofolate-binding site is contributed by 351–353; sequence SPF.

Belongs to the SHMT family. As to quaternary structure, homodimer. The cofactor is pyridoxal 5'-phosphate.

It localises to the cytoplasm. It carries out the reaction (6R)-5,10-methylene-5,6,7,8-tetrahydrofolate + glycine + H2O = (6S)-5,6,7,8-tetrahydrofolate + L-serine. It functions in the pathway one-carbon metabolism; tetrahydrofolate interconversion. It participates in amino-acid biosynthesis; glycine biosynthesis; glycine from L-serine: step 1/1. Functionally, catalyzes the reversible interconversion of serine and glycine with tetrahydrofolate (THF) serving as the one-carbon carrier. This reaction serves as the major source of one-carbon groups required for the biosynthesis of purines, thymidylate, methionine, and other important biomolecules. Also exhibits THF-independent aldolase activity toward beta-hydroxyamino acids, producing glycine and aldehydes, via a retro-aldol mechanism. This chain is Serine hydroxymethyltransferase, found in Clostridium botulinum (strain Langeland / NCTC 10281 / Type F).